The primary structure comprises 131 residues: Large ribosomal subunit protein bL17 (131 aa).

This sequence belongs to the bacterial ribosomal protein bL17 family. Part of the 50S ribosomal subunit. Contacts protein L32.

This Thermotoga maritima (strain ATCC 43589 / DSM 3109 / JCM 10099 / NBRC 100826 / MSB8) protein is Large ribosomal subunit protein bL17.